The primary structure comprises 282 residues: MSEISDAEKVRIASDFIKHAPPGEFNEVFNSVRMLLENDDLLKNKCVNAIAQYNVGQFVPVKLDGVAKQTLITPYNDLGNGRFYDEVSKKSFKYDHVRKEAADLQPHPAESGITEQWRQALQTQLDIYIDDHYAKSGTGVVFARNGVFTICIESHQFQPKNFCNGRWRSEWNVPVGDGKSGSQEMKGKILSQVHYYEDGNVQLFSEKEPVLKVNVSADFDKTAKEIIHAISEEETIYQNAVQENYANMSDTTFKALRRQLPVTRAKMDWNKAQTYRIGQEMK.

The protein belongs to the F-actin-capping protein alpha subunit family. As to quaternary structure, component of the F-actin capping complex, composed of a heterodimer of an alpha and a beta subunit.

The protein localises to the cytoplasm. It localises to the cytoskeleton. F-actin-capping proteins bind in a Ca(2+)-independent manner to the fast growing ends of actin filaments (barbed end) thereby blocking the exchange of subunits at these ends. Unlike other capping proteins (such as gelsolin and severin), these proteins do not sever actin filaments. The chain is F-actin-capping protein subunit alpha (cap-1) from Caenorhabditis elegans.